A 677-amino-acid polypeptide reads, in one-letter code: Levanase (677 aa).

Positions 1–24 (MKKRLIQVMIMFTLLLTMAFSADA) are cleaved as a signal peptide. Substrate-binding positions include 46–49 (WMND), Gln65, Trp73, 105–106 (FS), 171–172 (RD), Glu223, and Trp313. Asp49 is an active-site residue.

This sequence belongs to the glycosyl hydrolase 32 family.

The protein resides in the secreted. It catalyses the reaction Hydrolysis of terminal, non-reducing (2-&gt;1)- and (2-&gt;6)-linked beta-D-fructofuranose residues in fructans.. Is completely inhibited by Ag(+) and Hg(2+) ions. Exo-fructosidase that can hydrolyze both levan and inulin, leading to the production of free fructose. Is also able to hydrolyze sucrose and to a small extent raffinose, but not melezitose, stachylose, cellobiose, maltose, and lactose. The chain is Levanase (sacC) from Bacillus subtilis (strain 168).